A 569-amino-acid chain; its full sequence is Urease subunit alpha (569 aa).

The 439-residue stretch at 131–569 folds into the Urease domain; it reads GGIDTHIHFI…LPLAQRYLLL (439 aa). Ni(2+) contacts are provided by His-136, His-138, and Lys-219. Position 219 is an N6-carboxylysine (Lys-219). Position 221 (His-221) interacts with substrate. Residues His-248 and His-274 each contribute to the Ni(2+) site. The Proton donor role is filled by His-322. Asp-362 is a Ni(2+) binding site.

Belongs to the metallo-dependent hydrolases superfamily. Urease alpha subunit family. As to quaternary structure, heterotrimer of UreA (gamma), UreB (beta) and UreC (alpha) subunits. Three heterotrimers associate to form the active enzyme. Ni cation is required as a cofactor. Carboxylation allows a single lysine to coordinate two nickel ions.

It is found in the cytoplasm. It carries out the reaction urea + 2 H2O + H(+) = hydrogencarbonate + 2 NH4(+). It functions in the pathway nitrogen metabolism; urea degradation; CO(2) and NH(3) from urea (urease route): step 1/1. The protein is Urease subunit alpha of Synechococcus sp. (strain CC9605).